Here is a 150-residue protein sequence, read N- to C-terminus: Large ribosomal subunit protein bL9 (150 aa).

Belongs to the bacterial ribosomal protein bL9 family.

Binds to the 23S rRNA. This Photobacterium profundum (strain SS9) protein is Large ribosomal subunit protein bL9.